The chain runs to 76 residues: Small ribosomal subunit protein bS18 (76 aa).

Belongs to the bacterial ribosomal protein bS18 family. Part of the 30S ribosomal subunit. Forms a tight heterodimer with protein bS6.

In terms of biological role, binds as a heterodimer with protein bS6 to the central domain of the 16S rRNA, where it helps stabilize the platform of the 30S subunit. The polypeptide is Small ribosomal subunit protein bS18 (Nitrosomonas europaea (strain ATCC 19718 / CIP 103999 / KCTC 2705 / NBRC 14298)).